Reading from the N-terminus, the 343-residue chain is Selenide, water dikinase (343 aa).

Sec-15 is an active-site residue. Position 15 (Sec-15) is a non-standard amino acid, selenocysteine. ATP contacts are provided by residues Lys-18 and 45–47; that span reads TAD. A Mg(2+)-binding site is contributed by Asp-48. ATP contacts are provided by residues Asp-65, Asp-88, and 135–137; that span reads GHT. Mg(2+) is bound at residue Asp-88. Asp-223 lines the Mg(2+) pocket.

The protein belongs to the selenophosphate synthase 1 family. Class I subfamily. Homodimer. Mg(2+) is required as a cofactor.

The enzyme catalyses hydrogenselenide + ATP + H2O = selenophosphate + AMP + phosphate + 2 H(+). Its function is as follows. Synthesizes selenophosphate from selenide and ATP. This is Selenide, water dikinase from Carboxydothermus hydrogenoformans (strain ATCC BAA-161 / DSM 6008 / Z-2901).